The sequence spans 289 residues: Glycine--tRNA ligase alpha subunit (289 aa).

It belongs to the class-II aminoacyl-tRNA synthetase family. In terms of assembly, tetramer of two alpha and two beta subunits.

Its subcellular location is the cytoplasm. It carries out the reaction tRNA(Gly) + glycine + ATP = glycyl-tRNA(Gly) + AMP + diphosphate. The sequence is that of Glycine--tRNA ligase alpha subunit from Rickettsia typhi (strain ATCC VR-144 / Wilmington).